A 129-amino-acid polypeptide reads, in one-letter code: M-zodatoxin-Lt8g (129 aa).

The N-terminal stretch at 1-20 is a signal peptide; that stretch reads MKYFVVALALVAAFACIAES. Residues 21–60 constitute a propeptide that is removed on maturation; it reads KPAESEHELAEVEEENELADLEDAVWLEHLADLSDLEEAR. The Processing quadruplet motif motif lies at 57-60; sequence EEAR.

Post-translationally, cleavage of the propeptide depends on the processing quadruplet motif (XXXR, with at least one of X being E). In terms of tissue distribution, expressed by the venom gland.

It is found in the secreted. Functionally, insecticidal, cytolytic and antimicrobial peptide. Has insecticidal activity against the flesh fly S.carnaria. Has antibacterial activity against the Gram-negative bacteria E.coli. Forms voltage-dependent, ion-permeable channels in membranes. At high concentration causes cell membrane lysis. The protein is M-zodatoxin-Lt8g (cit 1-8) of Lachesana tarabaevi (Spider).